Consider the following 827-residue polypeptide: Glycerol-3-phosphate acyltransferase 1, mitochondrial (827 aa).

Residues 1-87 lie on the Cytoplasmic side of the membrane; the sequence is MEESSVTVGT…FFNPSIPSLG (87 aa). Residues 80–120 form an important for mitochondrial localization region; it reads NPSIPSLGLRNVIYINETHTRHRGWLARRLSYILFVQERDV. Residues 88–118 lie within the membrane without spanning it; that stretch reads LRNVIYINETHTRHRGWLARRLSYILFVQER. Residues 119–827 are Cytoplasmic-facing; it reads DVHKGMFATS…LEYILSFVVL (709 aa). The HXXXXD motif signature appears at 230-235; the sequence is HRSHID. CoA is bound by residues R278, R279, K288, R293, and R328. A Phosphoserine modification is found at S380. R462 is a binding site for CoA. Phosphoserine occurs at positions 687 and 694. N6-acetyllysine is present on residues K779 and K783.

This sequence belongs to the GPAT/DAPAT family. Highest levels in liver, intermediate levels in muscle and kidney, and lowest levels in lung and brain.

Its subcellular location is the mitochondrion outer membrane. The enzyme catalyses sn-glycerol 3-phosphate + an acyl-CoA = a 1-acyl-sn-glycero-3-phosphate + CoA. It carries out the reaction (9Z,12Z)-octadecadienoyl-CoA + sn-glycerol 3-phosphate = 1-(9Z,12Z)-octadecadienoyl-sn-glycero-3-phosphate + CoA. It catalyses the reaction sn-glycerol 3-phosphate + (9Z)-octadecenoyl-CoA = 1-(9Z-octadecenoyl)-sn-glycero-3-phosphate + CoA. The catalysed reaction is sn-glycerol 3-phosphate + octadecanoyl-CoA = 1-octadecanoyl-sn-glycero-3-phosphate + CoA. The enzyme catalyses sn-glycerol 3-phosphate + hexadecanoyl-CoA = 1-hexadecanoyl-sn-glycero-3-phosphate + CoA. It carries out the reaction dodecanoyl-CoA + sn-glycerol 3-phosphate = 1-dodecanoyl-sn-glycerol 3-phosphate + CoA. It catalyses the reaction 1-acyl-sn-glycero-3-phospho-(1'-sn-glycerol) + an acyl-CoA = a 1,2-diacyl-sn-glycero-3-phospho-(1'-sn-glycerol) + CoA. It functions in the pathway phospholipid metabolism; CDP-diacylglycerol biosynthesis; CDP-diacylglycerol from sn-glycerol 3-phosphate: step 1/3. Mitochondrial membrane protein that catalyzes the essential first step of biosynthesis of glycerolipids such as triglycerides, phosphatidic acids and lysophosphatidic acids. Esterifies acyl-group from acyl-coenzyme A (acyl-CoA) to the sn-1 position of glycerol-3-phosphate, to produce lysophosphatidic acid. Has a narrow hydrophobic binding cleft that selects for a linear acyl chain. Catalytic activity is higher for substrates with a 16-carbon acyl chain. In Mus musculus (Mouse), this protein is Glycerol-3-phosphate acyltransferase 1, mitochondrial.